We begin with the raw amino-acid sequence, 453 residues long: Kynureninase (453 aa).

Pyridoxal 5'-phosphate is bound by residues leucine 111, threonine 112, 139–142, serine 196, aspartate 226, histidine 229, and tyrosine 251; that span reads FPSD. At lysine 252 the chain carries N6-(pyridoxal phosphate)lysine. Positions 286 and 314 each coordinate pyridoxal 5'-phosphate.

This sequence belongs to the kynureninase family. Homodimer. Requires pyridoxal 5'-phosphate as cofactor.

Its subcellular location is the cytoplasm. It is found in the nucleus. It catalyses the reaction L-kynurenine + H2O = anthranilate + L-alanine + H(+). The enzyme catalyses 3-hydroxy-L-kynurenine + H2O = 3-hydroxyanthranilate + L-alanine + H(+). Its pathway is amino-acid degradation; L-kynurenine degradation; L-alanine and anthranilate from L-kynurenine: step 1/1. It functions in the pathway cofactor biosynthesis; NAD(+) biosynthesis; quinolinate from L-kynurenine: step 2/3. Catalyzes the cleavage of L-kynurenine (L-Kyn) and L-3-hydroxykynurenine (L-3OHKyn) into anthranilic acid (AA) and 3-hydroxyanthranilic acid (3-OHAA), respectively. This is Kynureninase from Saccharomyces cerevisiae (strain ATCC 204508 / S288c) (Baker's yeast).